The sequence spans 87 residues: Small ribosomal subunit protein uS17 (87 aa).

It belongs to the universal ribosomal protein uS17 family. Part of the 30S ribosomal subunit.

Functionally, one of the primary rRNA binding proteins, it binds specifically to the 5'-end of 16S ribosomal RNA. In Bacillus licheniformis (strain ATCC 14580 / DSM 13 / JCM 2505 / CCUG 7422 / NBRC 12200 / NCIMB 9375 / NCTC 10341 / NRRL NRS-1264 / Gibson 46), this protein is Small ribosomal subunit protein uS17.